A 966-amino-acid chain; its full sequence is Leucine--tRNA ligase (966 aa).

The 'HIGH' region motif lies at 41-51 (PYLNGNLHAGH). Residues 632–636 (KMSKS) carry the 'KMSKS' region motif. Residue Lys-635 participates in ATP binding.

Belongs to the class-I aminoacyl-tRNA synthetase family.

The protein localises to the cytoplasm. It catalyses the reaction tRNA(Leu) + L-leucine + ATP = L-leucyl-tRNA(Leu) + AMP + diphosphate. The sequence is that of Leucine--tRNA ligase from Methanosarcina mazei (strain ATCC BAA-159 / DSM 3647 / Goe1 / Go1 / JCM 11833 / OCM 88) (Methanosarcina frisia).